The sequence spans 830 residues: Penicillin-binding protein 1A (830 aa).

Residues 1-18 (MGKKKKKRKSSAFKIILN) lie on the Cytoplasmic side of the membrane. A helical; Signal-anchor for type II membrane protein membrane pass occupies residues 19-39 (VFLSIFLVAGVAFGGIVFAMI). The Extracellular portion of the chain corresponds to 40–830 (KTAPPLNVQQ…QNHEDNKNKQ (791 aa)). The interval 57-229 (SILYDDKGQY…PSVYYPYSSA (173 aa)) is transglycosylase. The active-site Proton donor; for transglycosylase activity is the Glu-96. Positions 357–641 (ASAVIMDYHN…AARLWGDIMK (285 aa)) are transpeptidase. Catalysis depends on Ser-398, which acts as the Acyl-ester intermediate; for transpeptidase activity. Positions 754–830 (GGSLPPTEEK…QNHEDNKNKQ (77 aa)) are disordered. Residues 760–786 (TEEKNNSNTRDKNKDKNKNKNKDKNPS) are compositionally biased toward basic and acidic residues. The segment covering 787 to 820 (QDKPNNNNNDNNSNNNNNNNDNNNNTKPPENDSN) has biased composition (low complexity). A compositionally biased stretch (basic and acidic residues) spans 821 to 830 (QNHEDNKNKQ).

In the N-terminal section; belongs to the glycosyltransferase 51 family. It in the C-terminal section; belongs to the transpeptidase family.

It is found in the cell membrane. It carries out the reaction [GlcNAc-(1-&gt;4)-Mur2Ac(oyl-L-Ala-gamma-D-Glu-L-Lys-D-Ala-D-Ala)](n)-di-trans,octa-cis-undecaprenyl diphosphate + beta-D-GlcNAc-(1-&gt;4)-Mur2Ac(oyl-L-Ala-gamma-D-Glu-L-Lys-D-Ala-D-Ala)-di-trans,octa-cis-undecaprenyl diphosphate = [GlcNAc-(1-&gt;4)-Mur2Ac(oyl-L-Ala-gamma-D-Glu-L-Lys-D-Ala-D-Ala)](n+1)-di-trans,octa-cis-undecaprenyl diphosphate + di-trans,octa-cis-undecaprenyl diphosphate + H(+). The catalysed reaction is Preferential cleavage: (Ac)2-L-Lys-D-Ala-|-D-Ala. Also transpeptidation of peptidyl-alanyl moieties that are N-acyl substituents of D-alanine.. Its pathway is cell wall biogenesis; peptidoglycan biosynthesis. Functionally, cell wall formation. Synthesis of cross-linked peptidoglycan from the lipid intermediates. The enzyme has a penicillin-insensitive transglycosylase N-terminal domain (formation of linear glycan strands) and a penicillin-sensitive transpeptidase C-terminal domain (cross-linking of the peptide subunits). In Clostridium botulinum (strain Hall / ATCC 3502 / NCTC 13319 / Type A), this protein is Penicillin-binding protein 1A (pbpA).